Consider the following 227-residue polypeptide: Zeamatin (227 aa).

The first 20 residues, Met1–Glu20, serve as a signal peptide directing secretion. 8 disulfides stabilise this stretch: Cys30–Cys226, Cys72–Cys82, Cys87–Cys93, Cys139–Cys215, Cys145–Cys198, Cys153–Cys163, Cys167–Cys176, and Cys177–Cys185.

The protein belongs to the thaumatin family.

Has antifungal activity. Inhibits Candida albicans and Trichoderma reesei; marginal inhibition observed against Alternaria solani and Neurospora crassa. The protein is Zeamatin (Zlp) of Zea mays (Maize).